Here is a 793-residue protein sequence, read N- to C-terminus: Phenylalanine--tRNA ligase beta subunit (793 aa).

The tRNA-binding domain maps to 39 to 148; it reads AGQFTHVIVA…DEAPIGMDLR (110 aa). One can recognise a B5 domain in the interval 401–477; the sequence is PGTVSFLFDT…RLYGYDKLQA (77 aa). Asp455, Asp461, Glu464, and Glu465 together coordinate Mg(2+). Positions 698–792 constitute an FDX-ACB domain; it reads SKYPQIRRDL…LENEFSILLR (95 aa).

This sequence belongs to the phenylalanyl-tRNA synthetase beta subunit family. Type 1 subfamily. In terms of assembly, tetramer of two alpha and two beta subunits. The cofactor is Mg(2+).

The protein localises to the cytoplasm. It catalyses the reaction tRNA(Phe) + L-phenylalanine + ATP = L-phenylalanyl-tRNA(Phe) + AMP + diphosphate + H(+). In Legionella pneumophila (strain Lens), this protein is Phenylalanine--tRNA ligase beta subunit.